The chain runs to 316 residues: Prenytransferase adrG (316 aa).

7 helical membrane-spanning segments follow: residues 36-56, 60-80, 131-151, 163-183, 191-211, 247-267, and 294-314; these read LLGFYLNTSPYLVGVAFCASI, KIPITVLLHRTILLSIWSIFL, VLIYLPWPCAVDCLIITFFAL, PQITLVNIGWAIPMAMHSLGL, PTVCMFLFIGLVIIMIDVIYS, GFLAMAGFFTGLGLSFFVVSV, and KSAFFLATLFWLFGFVIEYCL.

The protein belongs to the UbiA prenyltransferase family. Mg(2+) serves as cofactor.

The protein localises to the membrane. It carries out the reaction 3,5-dimethylorsellinate + (2E,6E)-farnesyl diphosphate = (3R)-3-farnesyl-6-hydroxy-2,3,5-trimethyl-4-oxocyclohexa-1,5-diene-1-carboxylate + diphosphate + H(+). It participates in secondary metabolite biosynthesis; terpenoid biosynthesis. Functionally, prenytransferase; part of the gene cluster that mediates the biosynthesis of andrastins, meroterpenoid compounds that exhibit inhibitory activity against ras farnesyltransferase, suggesting that they could be promising leads for antitumor agents. The first step of the pathway is the synthesis of 3,5-dimethylorsellinic acid (DMOA) by the polyketide synthase adrD via condensation of one acetyl-CoA starter unit with 3 malonyl-CoA units and 2 methylations. DMAO is then converted to farnesyl-DMAO by the prenyltransferase adrG. The methyltransferase adrK catalyzes the methylation of the carboxyl group of farnesyl-DMAO to farnesyl-DMAO methyl ester which is further converted to epoxyfarnesyl-DMAO methyl ester by the FAD-dependent monooxygenase adrH. The terpene cyclase adrI then catalyzes the carbon skeletal rearrangement to generate the andrastin E, the first compound in the pathway having the andrastin scaffold, with the tetracyclic ring system. The post-cyclization tailoring enzymes adrF, adrE, adrJ, and adrA, are involved in the conversion of andrastin E into andrastin A. The short chain dehydrogenase adrF is responsible for the oxidation of the C-3 a hydroxyl group of andrastin E to yield the corresponding ketone, andrastin D. The ketoreductase adrE stereoselectively reduces the carbonyl moiety to reverse the stereochemistry of the C-3 position to yield andrastin F. The acetyltransferase adrJ is the acetyltransferase that attaches the acetyl group to the C-3 hydroxyl group of andrastin F to yield andrastin C. Finally, the cytochrome P450 monooxygenase adrA catalyzes two sequential oxidation reactions of the C-23 methyl group, to generate the corresponding alcohol andrastin B, and aldehyde andrastin A. The chain is Prenytransferase adrG from Penicillium roqueforti.